The following is a 1109-amino-acid chain: Zinc finger E-box-binding homeobox 1 (1109 aa).

2 disordered regions span residues 1 to 106 and 123 to 143; these read MADG…DPNV and PEED…NGTP. Low complexity predominate over residues 15–30; sequence PRRNNVTNYNTVVEAN. 2 positions are modified to phosphoserine: S31 and S33. Over residues 87-98 the composition is skewed to acidic residues; sequence VKDDECDSDAEN. The C2H2-type 1 zinc finger occupies 150–173; sequence LTCPYCDRGYKRFTSLKEHIKYRH. Glycyl lysine isopeptide (Lys-Gly) (interchain with G-Cter in SUMO2) cross-links involve residues K166 and K175. C2H2-type zinc fingers lie at residues 180–202 and 220–242; these read FSCS…MTSH and FKCT…LRIH. The C2H2-type 4; atypical zinc-finger motif lies at 248–272; it reads YECPNCKKRFSHSGSYSSHISSKKC. The segment at 278-307 is disordered; that stretch reads VNGRPRSGLKTSQCSSPSLSTSPGSPTRPQ. K287 participates in a covalent cross-link: Glycyl lysine isopeptide (Lys-Gly) (interchain with G-Cter in SUMO2). The segment covering 288-304 has biased composition (low complexity); sequence TSQCSSPSLSTSPGSPT. 2 positions are modified to phosphoserine: S293 and S302. Residues K311 and K315 each participate in a glycyl lysine isopeptide (Lys-Gly) (interchain with G-Cter in SUMO2) cross-link. Residue K327 forms a Glycyl lysine isopeptide (Lys-Gly) (interchain with G-Cter in SUMO); alternate linkage. K327 is covalently cross-linked (Glycyl lysine isopeptide (Lys-Gly) (interchain with G-Cter in SUMO2); alternate). Glycyl lysine isopeptide (Lys-Gly) (interchain with G-Cter in SUMO2) cross-links involve residues K419, K473, K484, K495, and K528. Disordered regions lie at residues 468 to 501, 525 to 566, and 614 to 711; these read VPQN…KDKS, PELK…SQPP, and QIPG…PQVE. The span at 483-501 shows a compositional bias: basic and acidic residues; the sequence is CKSEKSPEDLTVKSEKDKS. The homeobox; atypical DNA-binding region spans 559–618; the sequence is DLSPSQPPLKNLLSLLKAYYALNAQPSTEELTKIADSVNLPLDVVKKWFEKMQAGQIPGQ. The segment covering 654–665 has biased composition (polar residues); the sequence is RGQSPLKMTSSP. S657, S664, S671, and S678 each carry phosphoserine. Residues 673–703 are compositionally biased toward polar residues; that stretch reads INGSRSCTSSPSPLNLSSARNPQGYSCVSEG. Residue T680 is modified to Phosphothreonine. S682 bears the Phosphoserine mark. K752 participates in a covalent cross-link: Glycyl lysine isopeptide (Lys-Gly) (interchain with G-Cter in SUMO); alternate. K752 participates in a covalent cross-link: Glycyl lysine isopeptide (Lys-Gly) (interchain with G-Cter in SUMO2); alternate. Residues 834–873 form a disordered region; sequence PPVKVIQPNGNQDERQDTSSEGVSVEDQNDSDCTPPKKKT. 2 C2H2-type zinc fingers span residues 881 to 903 and 909 to 931; these read YACD…KYEH and HECG…MRLH. Residues 937–958 form a C2H2-type 7; atypical zinc finger; it reads YQCDKCGKRFSHSGSYSQHMNH. The disordered stretch occupies residues 968–1109; the sequence is EDRDAMEQED…RLSEEKTNEA (142 aa). Residues 1012–1066 are compositionally biased toward acidic residues; that stretch reads EEDEDSEKEEEEEDKEMEELQEDKECENPQEEEEEEEEEEEEEEEEEEEEAEEAE. Positions 1071-1087 are enriched in low complexity; the sequence is AAKTGGAVEEEAAQQAG. The segment covering 1097–1109 has biased composition (basic and acidic residues); that stretch reads ESKRLSEEKTNEA.

The protein belongs to the delta-EF1/ZFH-1 C2H2-type zinc-finger family. Interacts (via N-terminus) with SMARCA4/BRG1. In terms of processing, ubiquitinated, leading to degradation in a proteasome-dependent manner. Deubiquitinated by USP51, leading to stabilization.

The protein localises to the nucleus. Acts as a transcriptional repressor. Binds to E-box sequences in the immunoglobulin heavy chain enhancer as well as in the regulatory regions of many other tissue-specific genes. Represses E-cadherin promoter and induces an epithelial-mesenchymal transition (EMT) by recruiting SMARCA4/BRG1. Represses BCL6 transcription in the presence of the corepressor CTBP1. Positively regulates neuronal differentiation. Represses RCOR1 transcription activation during neurogenesis. Represses transcription by binding to the E box (5'-CANNTG-3'). In the absence of TGFB1, acts as a repressor of COL1A2 transcription via binding to the E-box in the upstream enhancer region. This is Zinc finger E-box-binding homeobox 1 from Rattus norvegicus (Rat).